The sequence spans 450 residues: Tubulin alpha-1 chain (450 aa).

Glutamine 11 is a binding site for GTP. Position 40 is an N6-acetyllysine (lysine 40). Glutamate 71, serine 140, glycine 144, threonine 145, threonine 179, asparagine 206, and asparagine 228 together coordinate GTP. Glutamate 71 is a Mg(2+) binding site. The active site involves glutamate 254.

The protein belongs to the tubulin family. Dimer of alpha and beta chains. A typical microtubule is a hollow water-filled tube with an outer diameter of 25 nm and an inner diameter of 15 nM. Alpha-beta heterodimers associate head-to-tail to form protofilaments running lengthwise along the microtubule wall with the beta-tubulin subunit facing the microtubule plus end conferring a structural polarity. Microtubules usually have 13 protofilaments but different protofilament numbers can be found in some organisms and specialized cells. Interacts with Ote. It depends on Mg(2+) as a cofactor. Undergoes a tyrosination/detyrosination cycle, the cyclic removal and re-addition of a C-terminal tyrosine residue by the enzymes tubulin tyrosine carboxypeptidase (TTCP) and tubulin tyrosine ligase (TTL), respectively. In terms of processing, acetylation of alpha chains at Lys-40 stabilizes microtubules and affects affinity and processivity of microtubule motors. This modification has a role in multiple cellular functions, ranging from cell motility, cell cycle progression or cell differentiation to intracellular trafficking and signaling. During the early stages of oogenesis lky/Alpha-tubulin N-acetyltransferase 2 is the main acetyltransferase responsible for Lys-40 acetylation in germline cells while Atat/alpha-tubulin N-acetyltransferase 1 is the main acetyltransferase responsible for Lys-40 acetylation in somatic cells.

The protein localises to the cytoplasm. Its subcellular location is the cytoskeleton. It carries out the reaction GTP + H2O = GDP + phosphate + H(+). Its function is as follows. Tubulin is the major constituent of microtubules, a cylinder consisting of laterally associated linear protofilaments composed of alpha- and beta-tubulin heterodimers. Microtubules grow by the addition of GTP-tubulin dimers to the microtubule end, where a stabilizing cap forms. Below the cap, tubulin dimers are in GDP-bound state, owing to GTPase activity of alpha-tubulin. The chain is Tubulin alpha-1 chain (alphaTub84B) from Drosophila melanogaster (Fruit fly).